The sequence spans 325 residues: Diacylglycerol acyltransferase/mycolyltransferase Ag85B (325 aa).

The signal sequence occupies residues 1–40 (MTDVSRKIRAWGRRLMIGTAAAVVLPGLVGLAGGAATAGA). 82–83 (LR) provides a ligand contact to substrate. Positions 98-108 (FEWYYQSGLSI) are fibronectin-binding. An intrachain disulfide couples Cys-127 to Cys-132. The substrate site is built by Ser-166 and Asp-194. Residue Ser-166 is the Nucleophile of the active site. Glu-270 is a catalytic residue. Substrate-binding positions include 272–275 (FVRS), Lys-279, and 302–304 (HSW). His-302 is a catalytic residue.

It belongs to the mycobacterial A85 antigen family.

Its subcellular location is the secreted. The catalysed reaction is 2 alpha,alpha'-trehalose 6-mycolate = alpha,alpha'-trehalose 6,6'-bismycolate + alpha,alpha-trehalose. It carries out the reaction an acyl-CoA + a 1,2-diacyl-sn-glycerol = a triacyl-sn-glycerol + CoA. In terms of biological role, the antigen 85 proteins (FbpA, FbpB, FbpC) are responsible for the high affinity of mycobacteria for fibronectin, a large adhesive glycoprotein, which facilitates the attachment of M.tuberculosis to murine alveolar macrophages (AMs). They also help to maintain the integrity of the cell wall by catalyzing the transfer of mycolic acids to cell wall arabinogalactan and through the synthesis of alpha,alpha-trehalose dimycolate (TDM, cord factor). They catalyze the transfer of a mycoloyl residue from one molecule of alpha,alpha-trehalose monomycolate (TMM) to another TMM, leading to the formation of TDM. The protein is Diacylglycerol acyltransferase/mycolyltransferase Ag85B (fbpB) of Mycobacterium tuberculosis (strain ATCC 25177 / H37Ra).